The chain runs to 150 residues: Large ribosomal subunit protein bL9 (150 aa).

It belongs to the bacterial ribosomal protein bL9 family.

Binds to the 23S rRNA. This is Large ribosomal subunit protein bL9 from Mycoplasmopsis pulmonis (strain UAB CTIP) (Mycoplasma pulmonis).